We begin with the raw amino-acid sequence, 672 residues long: Glycine--tRNA ligase beta subunit (672 aa).

The protein belongs to the class-II aminoacyl-tRNA synthetase family. Tetramer of two alpha and two beta subunits.

It localises to the cytoplasm. It carries out the reaction tRNA(Gly) + glycine + ATP = glycyl-tRNA(Gly) + AMP + diphosphate. This chain is Glycine--tRNA ligase beta subunit (glyS), found in Thermotoga maritima (strain ATCC 43589 / DSM 3109 / JCM 10099 / NBRC 100826 / MSB8).